A 137-amino-acid polypeptide reads, in one-letter code: Large ribosomal subunit protein uL16 (137 aa).

The protein belongs to the universal ribosomal protein uL16 family. Part of the 50S ribosomal subunit.

Its function is as follows. Binds 23S rRNA and is also seen to make contacts with the A and possibly P site tRNAs. In Mesoplasma florum (strain ATCC 33453 / NBRC 100688 / NCTC 11704 / L1) (Acholeplasma florum), this protein is Large ribosomal subunit protein uL16.